The sequence spans 456 residues: MSKIVSINAYEVLDSRGNPTVKVELTTEKAYAEALVPSGASTGSKEALELRDKGTKYEKNWFGGKGVQTAVDNVNEIIFPALKGKDVTKQFEIDKLMIELDGTETKSKLGANAILAVSLAVAKAAANEANVPLYAYLAKLDNRQAYKLPVPMLNVINGGEHASNTIDFQEFMIMPLGAKTFKEAMQIANFVFHTLAKLLKEAGHGTQVGDEGGFAPNLHTHEETLDFLVNAIKKAGYNPATSGDNAVAICLDTASSELYCSESKTYTFKKFKKALDEKRPGFEKYASMKYKFTSDEYVEYYGNLIAKYPIISIEDSHDENDWEGFRKMKKLYGNRVQLVGDDLIVTNPKYIKMAIEKDAINASLIKINQIGSLWETIEAIKMTQAANMVPVISHRSGETEDTFIADLAVAFNTGEIKTGSLSRTDRIAKYNRLLKIEQELGNKAKYEGRASFSNLK.

Gln-169 lines the (2R)-2-phosphoglycerate pocket. Glu-211 serves as the catalytic Proton donor. Mg(2+) is bound by residues Asp-252, Glu-314, and Asp-341. Positions 366, 395, 396, and 417 each coordinate (2R)-2-phosphoglycerate. Lys-366 acts as the Proton acceptor in catalysis.

The protein belongs to the enolase family. It depends on Mg(2+) as a cofactor.

Its subcellular location is the cytoplasm. The protein localises to the secreted. It localises to the cell surface. It carries out the reaction (2R)-2-phosphoglycerate = phosphoenolpyruvate + H2O. It functions in the pathway carbohydrate degradation; glycolysis; pyruvate from D-glyceraldehyde 3-phosphate: step 4/5. Its function is as follows. Catalyzes the reversible conversion of 2-phosphoglycerate (2-PG) into phosphoenolpyruvate (PEP). It is essential for the degradation of carbohydrates via glycolysis. This Metamycoplasma arthritidis (strain 158L3-1) (Mycoplasma arthritidis) protein is Enolase.